Here is a 147-residue protein sequence, read N- to C-terminus: SsrA-binding protein (147 aa).

It belongs to the SmpB family.

It is found in the cytoplasm. Functionally, required for rescue of stalled ribosomes mediated by trans-translation. Binds to transfer-messenger RNA (tmRNA), required for stable association of tmRNA with ribosomes. tmRNA and SmpB together mimic tRNA shape, replacing the anticodon stem-loop with SmpB. tmRNA is encoded by the ssrA gene; the 2 termini fold to resemble tRNA(Ala) and it encodes a 'tag peptide', a short internal open reading frame. During trans-translation Ala-aminoacylated tmRNA acts like a tRNA, entering the A-site of stalled ribosomes, displacing the stalled mRNA. The ribosome then switches to translate the ORF on the tmRNA; the nascent peptide is terminated with the 'tag peptide' encoded by the tmRNA and targeted for degradation. The ribosome is freed to recommence translation, which seems to be the essential function of trans-translation. In Mycoplasmopsis agalactiae (strain NCTC 10123 / CIP 59.7 / PG2) (Mycoplasma agalactiae), this protein is SsrA-binding protein.